The sequence spans 374 residues: Biotin synthase (374 aa).

A Radical SAM core domain is found at 51–278 (NTVKVNYLVN…DTEIRIAGGR (228 aa)). [4Fe-4S] cluster-binding residues include C66, C70, and C73. Positions 110, 143, 203, and 273 each coordinate [2Fe-2S] cluster. The segment at 346–374 (IAGGTSVAGSAPDPAIRRRGAGTDVPANA) is disordered.

It belongs to the radical SAM superfamily. Biotin synthase family. In terms of assembly, homodimer. [4Fe-4S] cluster serves as cofactor. The cofactor is [2Fe-2S] cluster.

It catalyses the reaction (4R,5S)-dethiobiotin + (sulfur carrier)-SH + 2 reduced [2Fe-2S]-[ferredoxin] + 2 S-adenosyl-L-methionine = (sulfur carrier)-H + biotin + 2 5'-deoxyadenosine + 2 L-methionine + 2 oxidized [2Fe-2S]-[ferredoxin]. It functions in the pathway cofactor biosynthesis; biotin biosynthesis; biotin from 7,8-diaminononanoate: step 2/2. Its function is as follows. Catalyzes the conversion of dethiobiotin (DTB) to biotin by the insertion of a sulfur atom into dethiobiotin via a radical-based mechanism. The sequence is that of Biotin synthase from Nocardioides sp. (strain ATCC BAA-499 / JS614).